A 378-amino-acid polypeptide reads, in one-letter code: Phospho-N-acetylmuramoyl-pentapeptide-transferase (378 aa).

11 consecutive transmembrane segments (helical) span residues 26-46 (LFRL…TGAN), 57-77 (LPWL…VPLL), 103-123 (MGGI…TGFA), 127-147 (LSPT…IGWW), 171-191 (GIGA…ATVV), 195-215 (WGWV…VPMA), 225-245 (GLDG…GIIL), 247-267 (PYPD…GFLW), 275-295 (VFMG…IGLA), 302-322 (LLIV…QVLY), and 356-376 (IVRT…LLQW).

It belongs to the glycosyltransferase 4 family. MraY subfamily. The cofactor is Mg(2+).

The protein resides in the cell inner membrane. The enzyme catalyses UDP-N-acetyl-alpha-D-muramoyl-L-alanyl-gamma-D-glutamyl-meso-2,6-diaminopimeloyl-D-alanyl-D-alanine + di-trans,octa-cis-undecaprenyl phosphate = di-trans,octa-cis-undecaprenyl diphospho-N-acetyl-alpha-D-muramoyl-L-alanyl-D-glutamyl-meso-2,6-diaminopimeloyl-D-alanyl-D-alanine + UMP. It participates in cell wall biogenesis; peptidoglycan biosynthesis. Catalyzes the initial step of the lipid cycle reactions in the biosynthesis of the cell wall peptidoglycan: transfers peptidoglycan precursor phospho-MurNAc-pentapeptide from UDP-MurNAc-pentapeptide onto the lipid carrier undecaprenyl phosphate, yielding undecaprenyl-pyrophosphoryl-MurNAc-pentapeptide, known as lipid I. In Thermosynechococcus vestitus (strain NIES-2133 / IAM M-273 / BP-1), this protein is Phospho-N-acetylmuramoyl-pentapeptide-transferase.